Here is a 736-residue protein sequence, read N- to C-terminus: 1,4-alpha-glucan branching enzyme GlgB (736 aa).

The Nucleophile role is filled by aspartate 417. The active-site Proton donor is the glutamate 470.

This sequence belongs to the glycosyl hydrolase 13 family. GlgB subfamily. In terms of assembly, monomer.

The enzyme catalyses Transfers a segment of a (1-&gt;4)-alpha-D-glucan chain to a primary hydroxy group in a similar glucan chain.. It participates in glycan biosynthesis; glycogen biosynthesis. Functionally, catalyzes the formation of the alpha-1,6-glucosidic linkages in glycogen by scission of a 1,4-alpha-linked oligosaccharide from growing alpha-1,4-glucan chains and the subsequent attachment of the oligosaccharide to the alpha-1,6 position. The sequence is that of 1,4-alpha-glucan branching enzyme GlgB from Pseudomonas putida (strain ATCC 47054 / DSM 6125 / CFBP 8728 / NCIMB 11950 / KT2440).